The primary structure comprises 286 residues: Glycine--tRNA ligase alpha subunit (286 aa).

This sequence belongs to the class-II aminoacyl-tRNA synthetase family. As to quaternary structure, tetramer of two alpha and two beta subunits.

Its subcellular location is the cytoplasm. The catalysed reaction is tRNA(Gly) + glycine + ATP = glycyl-tRNA(Gly) + AMP + diphosphate. This chain is Glycine--tRNA ligase alpha subunit, found in Campylobacter concisus (strain 13826).